A 150-amino-acid chain; its full sequence is Small ribosomal subunit protein bS6 (150 aa).

The disordered stretch occupies residues 99-150 (GPSAMLQKRDRDDRGERGERGFGGGGFGGGRDREDRPRRGRDREEAATEETF). 2 stretches are compositionally biased toward basic and acidic residues: residues 105–118 (QKRD…RGER) and 128–144 (GRDR…REEA).

Belongs to the bacterial ribosomal protein bS6 family.

Binds together with bS18 to 16S ribosomal RNA. The protein is Small ribosomal subunit protein bS6 of Azorhizobium caulinodans (strain ATCC 43989 / DSM 5975 / JCM 20966 / LMG 6465 / NBRC 14845 / NCIMB 13405 / ORS 571).